The following is a 109-amino-acid chain: Large ribosomal subunit protein uL22 (109 aa).

Belongs to the universal ribosomal protein uL22 family. Part of the 50S ribosomal subunit.

Its function is as follows. This protein binds specifically to 23S rRNA; its binding is stimulated by other ribosomal proteins, e.g. L4, L17, and L20. It is important during the early stages of 50S assembly. It makes multiple contacts with different domains of the 23S rRNA in the assembled 50S subunit and ribosome. The globular domain of the protein is located near the polypeptide exit tunnel on the outside of the subunit, while an extended beta-hairpin is found that lines the wall of the exit tunnel in the center of the 70S ribosome. This Ralstonia nicotianae (strain ATCC BAA-1114 / GMI1000) (Ralstonia solanacearum) protein is Large ribosomal subunit protein uL22.